We begin with the raw amino-acid sequence, 487 residues long: Protein nucleotidyltransferase YdiU (487 aa).

8 residues coordinate ATP: glycine 90, glycine 92, arginine 93, lysine 113, aspartate 125, glycine 126, arginine 176, and arginine 183. Aspartate 252 (proton acceptor) is an active-site residue. Asparagine 253 and aspartate 262 together coordinate Mg(2+). An ATP-binding site is contributed by aspartate 262.

The protein belongs to the SELO family. The cofactor is Mg(2+). It depends on Mn(2+) as a cofactor.

It carries out the reaction L-seryl-[protein] + ATP = 3-O-(5'-adenylyl)-L-seryl-[protein] + diphosphate. The catalysed reaction is L-threonyl-[protein] + ATP = 3-O-(5'-adenylyl)-L-threonyl-[protein] + diphosphate. It catalyses the reaction L-tyrosyl-[protein] + ATP = O-(5'-adenylyl)-L-tyrosyl-[protein] + diphosphate. The enzyme catalyses L-histidyl-[protein] + UTP = N(tele)-(5'-uridylyl)-L-histidyl-[protein] + diphosphate. It carries out the reaction L-seryl-[protein] + UTP = O-(5'-uridylyl)-L-seryl-[protein] + diphosphate. The catalysed reaction is L-tyrosyl-[protein] + UTP = O-(5'-uridylyl)-L-tyrosyl-[protein] + diphosphate. Its function is as follows. Nucleotidyltransferase involved in the post-translational modification of proteins. It can catalyze the addition of adenosine monophosphate (AMP) or uridine monophosphate (UMP) to a protein, resulting in modifications known as AMPylation and UMPylation. The sequence is that of Protein nucleotidyltransferase YdiU from Azotobacter vinelandii (strain DJ / ATCC BAA-1303).